The following is a 360-amino-acid chain: DNA replication and repair protein RecF (360 aa).

30-37 (GHNGSGKT) is a binding site for ATP.

It belongs to the RecF family.

Its subcellular location is the cytoplasm. Functionally, the RecF protein is involved in DNA metabolism; it is required for DNA replication and normal SOS inducibility. RecF binds preferentially to single-stranded, linear DNA. It also seems to bind ATP. The chain is DNA replication and repair protein RecF from Shewanella amazonensis (strain ATCC BAA-1098 / SB2B).